Here is a 734-residue protein sequence, read N- to C-terminus: Platelet glycoprotein Ib alpha chain (734 aa).

An N-terminal signal peptide occupies residues 1–16 (MALLILLFLLPSPLHS). The 31-residue stretch at 17–47 (QHTCSISKVTSLLEVNCENKKLTALPADLPA) folds into the LRRNT domain. The Extracellular portion of the chain corresponds to 17 to 612 (QHTCSISKVT…LNSDFCCFLP (596 aa)). C20 and C33 are joined by a disulfide. LRR repeat units lie at residues 48–69 (DTGI…SLVH), 72–93 (HLTY…GKLI), 94–115 (KLEN…GWAL), 117–140 (ALTT…DGLS), 141–162 (QLQE…LLLP), 165–188 (KLKK…DGLE), and 189–210 (DLDT…FFGT). Residues 221 to 282 (NSWYCDCEIL…YSYPGKGCPT (62 aa)) form the LRRCT domain. 2 disulfides stabilise this stretch: C225–C264 and C227–C280. Y292 bears the Sulfotyrosine mark. O-linked (GalNAc...) threonine glycans are attached at residues T301, T311, T315, and T316. Residue S335 is glycosylated (O-linked (GalNAc...) serine). Residues T339, T348, T358, and T377 are each glycosylated (O-linked (GalNAc...) threonine). An O-linked (GalNAc...) serine glycan is attached at S382. O-linked (GalNAc...) threonine glycans are attached at residues T384, T385, and T405. Disordered stretches follow at residues 406 to 429 (STLT…TPEH) and 460 to 526 (EPST…PEPS). O-linked (GalNAc...) threonine glycosylation is found at T512, T516, T519, T530, T542, T546, T550, and T562. An O-linked (GalNAc...) serine glycan is attached at S572. O-linked (GalNAc...) threonine glycosylation occurs at T573. Residues 613-633 (LGFYVLGLLWLLFASVVLILL) form a helical membrane-spanning segment. Over 634 to 734 (LTWTWHVTPH…VGIRYSGHSL (101 aa)) the chain is Cytoplasmic. Residues S711 and S714 each carry the phosphoserine modification.

In terms of assembly, two GP-Ib beta are disulfide-linked to one GP-Ib alpha. GP-IX is complexed with the GP-Ib heterodimer via a non covalent linkage. Interacts with FLNB. Interacts with FLNA (via filamin repeats 4, 9, 12, 17, 19, 21, and 23). In terms of processing, O-glycosylated. Post-translationally, glycocalicin is the product of a proteolytic cleavage/shedding, catalyzed by ADAM17, which releases most of the extracellular domain. Binding sites for vWF and thrombin are in this part of the protein.

Its subcellular location is the membrane. In terms of biological role, GP-Ib, a surface membrane protein of platelets, participates in the formation of platelet plugs by binding to the A1 domain of vWF, which is already bound to the subendothelium. This chain is Platelet glycoprotein Ib alpha chain (Gp1ba), found in Mus musculus (Mouse).